The primary structure comprises 66 residues: Large ribosomal subunit protein bL33c (66 aa).

It belongs to the bacterial ribosomal protein bL33 family.

The protein resides in the plastid. The protein localises to the chloroplast. The polypeptide is Large ribosomal subunit protein bL33c (Platanus occidentalis (Sycamore)).